We begin with the raw amino-acid sequence, 339 residues long: Erlin-2 (339 aa).

Residues 1–3 (MAQ) lie on the Cytoplasmic side of the membrane. A helical membrane pass occupies residues 4–24 (LGAVVAVASSFFCASLFSAVH). The Extracellular portion of the chain corresponds to 25–339 (KIEEGHIGVY…EPLETATKDN (315 aa)). Asn-106 carries an N-linked (GlcNAc...) asparagine glycan. Positions 177–309 (EAIRRNYELM…DIPNMFMDSA (133 aa)) are interaction with ERLIN1. Lys-267 bears the N6-acetyllysine mark.

It belongs to the band 7/mec-2 family. Forms a heteromeric complex with ERLIN1. In complex with ERLIN1, interacts with RNF170. Interacts with activated ITPR1, independently of the degree of ITPR1 polyubiquitination. Interacts with SCAP, INSIG1, SREBF1 and SREBF2 under cholesterol sufficiency conditions; indicative for an association with the SCAP-SREBP-INSIG complex. Probably part of an AMFR/gp78 and INSIG1-containing ubiquitin ligase complex involved in ERAD of HMGCR. Interacts with TMUB1; TMUB1 bridges the association with AMFR. Interacts with SYVN1 and RNF139. Interacts with TMEM259. Interacts with TMEM41B. Deubiquitinated by USP25; leading to stabilization.

The protein localises to the endoplasmic reticulum membrane. Its function is as follows. Component of the ERLIN1/ERLIN2 complex which mediates the endoplasmic reticulum-associated degradation (ERAD) of inositol 1,4,5-trisphosphate receptors (IP3Rs) such as ITPR1. Promotes sterol-accelerated ERAD of HMGCR probably implicating an AMFR/gp78-containing ubiquitin ligase complex. Involved in regulation of cellular cholesterol homeostasis by regulation the SREBP signaling pathway. May promote ER retention of the SCAP-SREBF complex. The sequence is that of Erlin-2 from Rattus norvegicus (Rat).